Reading from the N-terminus, the 325-residue chain is MTTPVFCTNCGNRLSPQVRFCESCGCPVALTSEPPSFSGPPLSPLPPPPPTFNVDEVPSHKRGVTPWIPFFLLFSSVVVLGGLWWLGAFNLPQWNQWLVKILPTNTSSPVVTSPTPTVAPVDANAVSLEDFVGVWMVMEGAPGEGGEAIFTMSLEGNVIVVEAEGDRVEFPTLNGRKLEGSVVEDGVTIPITVELNQNKDQIIVTVLPPNSELQVGVGQRVKGIDDLDSPSNSRDNSLNIDENVLTERQALELLIAWPEIADWMQRVQQEAPQNQTLLEIVETTPQQYLIRAYESVNNPGEPGHTATFGWYNVDRQTGEVTQSIP.

A helical membrane pass occupies residues 67 to 87; it reads WIPFFLLFSSVVVLGGLWWLG.

Its subcellular location is the membrane. This is an uncharacterized protein from Synechocystis sp. (strain ATCC 27184 / PCC 6803 / Kazusa).